The following is a 302-amino-acid chain: Tyrosine recombinase XerC (302 aa).

The Core-binding (CB) domain occupies 6–90; it reads DLEVTCLQDY…AIKQWGEFLL (85 aa). A Tyr recombinase domain is found at 111–290; that stretch reads PLPKNMDVDS…DFQHLAKVYD (180 aa). Catalysis depends on residues arginine 150, lysine 174, histidine 242, arginine 245, and histidine 268. The active-site O-(3'-phospho-DNA)-tyrosine intermediate is the tyrosine 277.

The protein belongs to the 'phage' integrase family. XerC subfamily. In terms of assembly, forms a cyclic heterotetrameric complex composed of two molecules of XerC and two molecules of XerD.

Its subcellular location is the cytoplasm. Its function is as follows. Site-specific tyrosine recombinase, which acts by catalyzing the cutting and rejoining of the recombining DNA molecules. The XerC-XerD complex is essential to convert dimers of the bacterial chromosome into monomers to permit their segregation at cell division. It also contributes to the segregational stability of plasmids. The protein is Tyrosine recombinase XerC of Shewanella putrefaciens (strain CN-32 / ATCC BAA-453).